The sequence spans 701 residues: MNNGFFNSDFDSIFRRMMKDMQGSNQVGNKKYYINGKEVSPEELAQLTQQGGNHSAEQSAQAFQQAAQRQQGQQGGNGNYLEQIGRNLTQEARDGLLDPVIGRDKEIQETAEVLSRRTKNNPILVGEAGVGKTAIVEGLAQAIVEGNVPAAIKDKEIISVDISSLEAGTQYRGAFEENIQKLIEGVKSSQNAVLFFDEIHQIIGSGATGSDSGSKGLSDILKPALSRGEISIIGATTQDEYRNNILKDSALTRRFNEVLVNEPSAKDTVEILKGIREKFEEHHQVKLPDDVLKACVDLSIQYIPQRLLPDKAIDVLDITAAHLSAQSPAVDKVETEKRISELENDKRKAVSAEEYKKADDIQNEIKSLQDKLENSNGEHTAVATVHDISDTIQRLTGIPVSQMDDNDIERLKNISNRLRSKIIGQDQAVEMVSRAIRRNRAGFDDGNRPIGSFLFVGPTGVGKTELAKQLAIDLFGNKDALIRLDMSEYSDTTAVSKMIGTTAGYVGYDDNSNTLTEKVRRNPYSVILFDEIEKANPQILTLLLQVMDDGNLTDGQGNVINFKNTIIICTSNAGFGNGNDAEEKDIMHEMKKFFRPEFLNRFNGIVEFLHLDKDALQDIVNLLLDDVQVTLDKKGITMDVSQDAKDWLIEEGYDEELGARPLRRIVEQQVRDKITDYYLDHTDVKHVDIDVEDNELVVKGK.

Residues 47–57 show a composition bias toward polar residues; it reads LTQQGGNHSAE. The interval 47 to 79 is disordered; sequence LTQQGGNHSAEQSAQAFQQAAQRQQGQQGGNGN. Positions 58 to 72 are enriched in low complexity; it reads QSAQAFQQAAQRQQG. The i stretch occupies residues 81–332; the sequence is LEQIGRNLTQ…LSAQSPAVDK (252 aa). 126–133 contributes to the ATP binding site; it reads GEAGVGKT. The UVR domain maps to 336–371; sequence EKRISELENDKRKAVSAEEYKKADDIQNEIKSLQDK. The tract at residues 383–575 is II; sequence ATVHDISDTI…IIICTSNAGF (193 aa). 457 to 464 lines the ATP pocket; the sequence is GPTGVGKT.

The protein belongs to the ClpA/ClpB family. ClpL subfamily.

Its function is as follows. Required for the development of induced thermotolerance. This is ATP-dependent Clp protease ATP-binding subunit ClpL (clpL) from Staphylococcus aureus (strain USA300).